The following is a 427-amino-acid chain: 3-phosphoshikimate 1-carboxyvinyltransferase (427 aa).

Positions 20, 21, and 25 each coordinate 3-phosphoshikimate. K20 contacts phosphoenolpyruvate. Phosphoenolpyruvate contacts are provided by G92 and R120. Residues S166, Q168, D312, and K339 each coordinate 3-phosphoshikimate. Position 168 (Q168) interacts with phosphoenolpyruvate. The active-site Proton acceptor is the D312. The phosphoenolpyruvate site is built by R343 and R385.

The protein belongs to the EPSP synthase family. Monomer.

It is found in the cytoplasm. It carries out the reaction 3-phosphoshikimate + phosphoenolpyruvate = 5-O-(1-carboxyvinyl)-3-phosphoshikimate + phosphate. It functions in the pathway metabolic intermediate biosynthesis; chorismate biosynthesis; chorismate from D-erythrose 4-phosphate and phosphoenolpyruvate: step 6/7. Functionally, catalyzes the transfer of the enolpyruvyl moiety of phosphoenolpyruvate (PEP) to the 5-hydroxyl of shikimate-3-phosphate (S3P) to produce enolpyruvyl shikimate-3-phosphate and inorganic phosphate. In Streptococcus thermophilus (strain ATCC BAA-250 / LMG 18311), this protein is 3-phosphoshikimate 1-carboxyvinyltransferase.